A 217-amino-acid chain; its full sequence is DNA transformation protein TfoX (217 aa).

The protein belongs to the Sxy/TfoX family.

Functionally, required for DNA transformation. Positively regulates genes required for DNA transformation (late competence-specific genes) in association with CRP. Required for expression of the late competence-specific gene, com101A. Required for expression of the dprABC operon. The protein is DNA transformation protein TfoX of Haemophilus influenzae (strain ATCC 51907 / DSM 11121 / KW20 / Rd).